We begin with the raw amino-acid sequence, 481 residues long: Putative F-box/FBD/LRR-repeat protein At5g25850 (481 aa).

Residues 19-69 (INRLSQLSDPLICQILSHLPIKEVVTTSVLSTRWKNIWLSVPSLELIYSIF) enclose the F-box domain. LRR repeat units follow at residues 123-151 (VRRV…KLFH), 173-198 (VWFP…KIDV), and 328-356 (HVTL…IVAF). Positions 401 to 452 (QLSFSSVPKCLLSSLQFVELNAQILRFDGEILNLAKYFLENSSILQKLTLHP) constitute an FBD domain.

This Arabidopsis thaliana (Mouse-ear cress) protein is Putative F-box/FBD/LRR-repeat protein At5g25850.